A 503-amino-acid polypeptide reads, in one-letter code: ATP synthase subunit alpha (503 aa).

170–177 (GDRQTGKT) provides a ligand contact to ATP.

F-type ATPases have 2 components, CF(1) - the catalytic core - and CF(0) - the membrane proton channel. CF(1) has five subunits: alpha(3), beta(3), gamma(1), delta(1), epsilon(1). CF(0) has four main subunits: a(1), b(1), b'(1) and c(9-12).

It is found in the cellular thylakoid membrane. The enzyme catalyses ATP + H2O + 4 H(+)(in) = ADP + phosphate + 5 H(+)(out). Inhibited by dicyclohexylcarbodiimide. Its function is as follows. Produces ATP from ADP in the presence of a proton gradient across the membrane. The alpha chain is a regulatory subunit. The complex from the organism is particularly stable to disruption and remains functional after 6 hrs at 55 degrees Celsius. The protein is ATP synthase subunit alpha of Thermosynechococcus vestitus (strain NIES-2133 / IAM M-273 / BP-1).